A 508-amino-acid polypeptide reads, in one-letter code: Phenylalanine--tRNA ligase alpha subunit (508 aa).

Ala2 carries the N-acetylalanine modification. The residue at position 190 (Thr190) is a Phosphothreonine. Phosphoserine is present on residues Ser193 and Ser301. Lys311 bears the N6-acetyllysine mark. L-phenylalanine-binding positions include Thr329, 372–374, and Tyr412; that span reads QIE. Residue Glu414 coordinates Mg(2+). Phe438 contributes to the L-phenylalanine binding site.

This sequence belongs to the class-II aminoacyl-tRNA synthetase family. Phe-tRNA synthetase alpha subunit type 2 subfamily. As to quaternary structure, heterotetramer; dimer of two heterodimers formed by FARSA and FARSB. Mg(2+) serves as cofactor.

The protein resides in the cytoplasm. The enzyme catalyses tRNA(Phe) + L-phenylalanine + ATP = L-phenylalanyl-tRNA(Phe) + AMP + diphosphate + H(+). This chain is Phenylalanine--tRNA ligase alpha subunit (FARSA), found in Pongo abelii (Sumatran orangutan).